The chain runs to 419 residues: Serine--tRNA ligase (419 aa).

A disordered region spans residues 45–66 (ADSLRAEQKAASKSVGGASPEE). Residue 226–228 (TSE) coordinates L-serine. ATP contacts are provided by residues 257–259 (RRE) and valine 273. Glutamate 280 contributes to the L-serine binding site. 344–347 (ELTS) provides a ligand contact to ATP. Threonine 379 serves as a coordination point for L-serine.

This sequence belongs to the class-II aminoacyl-tRNA synthetase family. Type-1 seryl-tRNA synthetase subfamily. Homodimer. The tRNA molecule binds across the dimer.

Its subcellular location is the cytoplasm. The catalysed reaction is tRNA(Ser) + L-serine + ATP = L-seryl-tRNA(Ser) + AMP + diphosphate + H(+). The enzyme catalyses tRNA(Sec) + L-serine + ATP = L-seryl-tRNA(Sec) + AMP + diphosphate + H(+). Its pathway is aminoacyl-tRNA biosynthesis; selenocysteinyl-tRNA(Sec) biosynthesis; L-seryl-tRNA(Sec) from L-serine and tRNA(Sec): step 1/1. In terms of biological role, catalyzes the attachment of serine to tRNA(Ser). Is also able to aminoacylate tRNA(Sec) with serine, to form the misacylated tRNA L-seryl-tRNA(Sec), which will be further converted into selenocysteinyl-tRNA(Sec). This chain is Serine--tRNA ligase, found in Mycobacterium ulcerans (strain Agy99).